An 84-amino-acid polypeptide reads, in one-letter code: Exodeoxyribonuclease 7 small subunit (84 aa).

The protein belongs to the XseB family. As to quaternary structure, heterooligomer composed of large and small subunits.

It is found in the cytoplasm. It catalyses the reaction Exonucleolytic cleavage in either 5'- to 3'- or 3'- to 5'-direction to yield nucleoside 5'-phosphates.. Its function is as follows. Bidirectionally degrades single-stranded DNA into large acid-insoluble oligonucleotides, which are then degraded further into small acid-soluble oligonucleotides. The chain is Exodeoxyribonuclease 7 small subunit from Yersinia pseudotuberculosis serotype O:3 (strain YPIII).